The chain runs to 653 residues: Mediator of RNA polymerase II transcription subunit 17 (653 aa).

The tract at residues 246–271 is disordered; that stretch reads SNESDEHIDSTTGHDIPGTSEKLSAS.

Belongs to the Mediator complex subunit 17 family. As to quaternary structure, component of the Mediator complex.

The protein resides in the nucleus. Component of the Mediator complex, a coactivator involved in the regulated transcription of nearly all RNA polymerase II-dependent genes. Mediator functions as a bridge to convey information from gene-specific regulatory proteins to the basal RNA polymerase II transcription machinery. The Mediator complex, having a compact conformation in its free form, is recruited to promoters by direct interactions with regulatory proteins and serves for the assembly of a functional preinitiation complex with RNA polymerase II and the general transcription factors. In Arabidopsis thaliana (Mouse-ear cress), this protein is Mediator of RNA polymerase II transcription subunit 17 (MED17).